We begin with the raw amino-acid sequence, 90 residues long: Probable Fe(2+)-trafficking protein (90 aa).

It belongs to the Fe(2+)-trafficking protein family.

Its function is as follows. Could be a mediator in iron transactions between iron acquisition and iron-requiring processes, such as synthesis and/or repair of Fe-S clusters in biosynthetic enzymes. This is Probable Fe(2+)-trafficking protein from Koribacter versatilis (strain Ellin345).